Reading from the N-terminus, the 385-residue chain is Glucans biosynthesis protein C (385 aa).

10 helical membrane-spanning segments follow: residues 17 to 37 (AWLM…SHTW), 60 to 80 (MQVF…RYPL), 91 to 111 (VGIP…IMLQ), 137 to 157 (ISHL…VWIF), 173 to 193 (KFSM…YAVI), 212 to 232 (FIVM…LAFI), 239 to 259 (LFTT…VAYL), 274 to 294 (TESV…FSFG), 311 to 331 (ASLF…AYIT), and 338 to 358 (WLGF…LYEI).

The protein belongs to the acyltransferase 3 family. OpgC subfamily.

It is found in the cell membrane. It functions in the pathway glycan metabolism; osmoregulated periplasmic glucan (OPG) biosynthesis. In terms of biological role, necessary for the succinyl substitution of periplasmic glucans. Could catalyze the transfer of succinyl residues from the cytoplasmic side of the membrane to the nascent glucan backbones on the periplasmic side of the membrane. The sequence is that of Glucans biosynthesis protein C from Escherichia coli (strain K12 / MC4100 / BW2952).